The primary structure comprises 136 residues: 5-hydroxyisourate hydrolase (136 aa).

Residues 1-20 (MKRYILATAIASLVAAPAMA) form the signal peptide. The substrate site is built by H31, R69, and Y133.

It belongs to the transthyretin family. 5-hydroxyisourate hydrolase subfamily. In terms of assembly, homotetramer.

The protein localises to the periplasm. The catalysed reaction is 5-hydroxyisourate + H2O = 5-hydroxy-2-oxo-4-ureido-2,5-dihydro-1H-imidazole-5-carboxylate + H(+). Functionally, catalyzes the hydrolysis of 5-hydroxyisourate (HIU) to 2-oxo-4-hydroxy-4-carboxy-5-ureidoimidazoline (OHCU). This chain is 5-hydroxyisourate hydrolase (hiuH), found in Salmonella typhi.